Reading from the N-terminus, the 595-residue chain is Polyadenylate-binding protein-interacting protein 4 (595 aa).

Positions 48–113 constitute a Sm domain; it reads RLVYFTTCKI…SRSEFVRKPP (66 aa). 2 stretches are compositionally biased toward polar residues: residues 302 to 313 and 326 to 346; these read GGSSTSDGQKPA and GDSQSSRKNKNVDQSCSTSKQ. Disordered stretches follow at residues 302–505 and 536–595; these read GGSS…FYYP and MYHP…KGRE. A compositionally biased stretch (basic and acidic residues) spans 364 to 382; that stretch reads DEQRRKNNEEVSHNNRSAE. A compositionally biased stretch (low complexity) spans 416–465; sequence SQVSSKTKSESSFGQSASRSSESRPGPSTSSRPGLSPSSSIGSMASSEKS. Positions 466–474 match the PAM2-like 1; degenerate motif; sequence TLNPNAKEF. Residues 475 to 485 carry the PAM2-like 2 motif; the sequence is KLNPKAKSFKP. Composition is skewed to low complexity over residues 488 to 501 and 548 to 570; these read SAAAPPQSPIADAS and QPQYPQQQMIPGQQQQQMIPGQQ.

Expressed in cauline leaves, stems, rosette leaves, immature siliques and primary inflorescences.

In Arabidopsis thaliana (Mouse-ear cress), this protein is Polyadenylate-binding protein-interacting protein 4 (CID4).